A 307-amino-acid polypeptide reads, in one-letter code: MELKQVIIAHKAGHNESKTYAERCARELEARGCKVLMGPSGIKDNPYPVFLASATEKIDLALVLGGDGTTLAAARHLSPEGIPILSVNVGGHLGFLTEPFDVFQDTQKVWDRLNQDRYAVSQRMMLAASLFEGDRRDPQMVGETYYCLNEMCIKPASIDRMPTAIIEVEVDGELIDQYQCDGLLVATPTGSTCYTSSANGPILHPGMDAIVITPICPLSLSSRPIVIPPGSSVNIWPLGDFELNTKLWTDGSLATGVWPGQRVGVWMAHRAAQFILLRESYSFYKTLRDKLQWAGARFLYDGNNKVN.

The active-site Proton acceptor is Asp67. Residues 67 to 68, 149 to 150, Arg160, Asp181, and 192 to 197 contribute to the NAD(+) site; these read DG, NE, and TCYTSS.

Belongs to the NAD kinase family. A divalent metal cation serves as cofactor.

The protein localises to the cytoplasm. It carries out the reaction NAD(+) + ATP = ADP + NADP(+) + H(+). Involved in the regulation of the intracellular balance of NAD and NADP, and is a key enzyme in the biosynthesis of NADP. Catalyzes specifically the phosphorylation on 2'-hydroxyl of the adenosine moiety of NAD to yield NADP. Essential for photoheterotrophic growth. Has a significant function in the oxidative pentose phosphate (OPP) pathway for glucose catabolism under photoheterotrophic conditions. Is also involved in cellular redox homeostasis. The sequence is that of NAD kinase 1 from Synechocystis sp. (strain ATCC 27184 / PCC 6803 / Kazusa).